We begin with the raw amino-acid sequence, 848 residues long: DNA mismatch repair protein MutS (848 aa).

ATP is bound at residue 610-617 (GPNMGGKS).

It belongs to the DNA mismatch repair MutS family.

This protein is involved in the repair of mismatches in DNA. It is possible that it carries out the mismatch recognition step. This protein has a weak ATPase activity. The protein is DNA mismatch repair protein MutS of Francisella philomiragia subsp. philomiragia (strain ATCC 25017 / CCUG 19701 / FSC 153 / O#319-036).